Reading from the N-terminus, the 524-residue chain is 2-isopropylmalate synthase (524 aa).

Residues Val-5 to His-267 form the Pyruvate carboxyltransferase domain. Positions 14, 202, 204, and 238 each coordinate Mn(2+). Positions Lys-392–Val-524 are regulatory domain.

This sequence belongs to the alpha-IPM synthase/homocitrate synthase family. LeuA type 1 subfamily. Homodimer. Requires Mn(2+) as cofactor.

It localises to the cytoplasm. It carries out the reaction 3-methyl-2-oxobutanoate + acetyl-CoA + H2O = (2S)-2-isopropylmalate + CoA + H(+). Its pathway is amino-acid biosynthesis; L-leucine biosynthesis; L-leucine from 3-methyl-2-oxobutanoate: step 1/4. Functionally, catalyzes the condensation of the acetyl group of acetyl-CoA with 3-methyl-2-oxobutanoate (2-ketoisovalerate) to form 3-carboxy-3-hydroxy-4-methylpentanoate (2-isopropylmalate). This Aeromonas salmonicida (strain A449) protein is 2-isopropylmalate synthase.